Reading from the N-terminus, the 398-residue chain is Riboflavin biosynthesis protein RibBA (398 aa).

Residues methionine 1–asparagine 199 form a DHBP synthase region. D-ribulose 5-phosphate is bound by residues arginine 26 to glutamate 27, aspartate 31, arginine 138 to threonine 142, and glutamate 162. Mg(2+) is bound at residue glutamate 27. Histidine 141 contributes to the Mg(2+) binding site. The segment at isoleucine 200–phenylalanine 398 is GTP cyclohydrolase II. Position 251 to 255 (arginine 251 to glutamate 255) interacts with GTP. The Zn(2+) site is built by cysteine 256, cysteine 267, and cysteine 269. Residues glutamine 272, glutamate 294–arginine 296, and threonine 316 contribute to the GTP site. The Proton acceptor; for GTP cyclohydrolase activity role is filled by aspartate 328. Arginine 330 acts as the Nucleophile; for GTP cyclohydrolase activity in catalysis. GTP is bound by residues threonine 351 and lysine 356.

It in the N-terminal section; belongs to the DHBP synthase family. The protein in the C-terminal section; belongs to the GTP cyclohydrolase II family. Mg(2+) is required as a cofactor. It depends on Mn(2+) as a cofactor. Requires Zn(2+) as cofactor.

It carries out the reaction D-ribulose 5-phosphate = (2S)-2-hydroxy-3-oxobutyl phosphate + formate + H(+). The enzyme catalyses GTP + 4 H2O = 2,5-diamino-6-hydroxy-4-(5-phosphoribosylamino)-pyrimidine + formate + 2 phosphate + 3 H(+). The protein operates within cofactor biosynthesis; riboflavin biosynthesis; 2-hydroxy-3-oxobutyl phosphate from D-ribulose 5-phosphate: step 1/1. It participates in cofactor biosynthesis; riboflavin biosynthesis; 5-amino-6-(D-ribitylamino)uracil from GTP: step 1/4. Functionally, catalyzes the conversion of D-ribulose 5-phosphate to formate and 3,4-dihydroxy-2-butanone 4-phosphate. In terms of biological role, catalyzes the conversion of GTP to 2,5-diamino-6-ribosylamino-4(3H)-pyrimidinone 5'-phosphate (DARP), formate and pyrophosphate. The polypeptide is Riboflavin biosynthesis protein RibBA (Bacillus velezensis (strain DSM 23117 / BGSC 10A6 / LMG 26770 / FZB42) (Bacillus amyloliquefaciens subsp. plantarum)).